A 249-amino-acid chain; its full sequence is Glucosamine-6-phosphate deaminase (249 aa).

The active-site Proton acceptor; for enolization step is aspartate 67. Asparagine 136 functions as the For ring-opening step in the catalytic mechanism. Histidine 138 serves as the catalytic Proton acceptor; for ring-opening step. Glutamate 143 serves as the catalytic For ring-opening step.

The protein belongs to the glucosamine/galactosamine-6-phosphate isomerase family. NagB subfamily.

It carries out the reaction alpha-D-glucosamine 6-phosphate + H2O = beta-D-fructose 6-phosphate + NH4(+). It participates in amino-sugar metabolism; N-acetylneuraminate degradation; D-fructose 6-phosphate from N-acetylneuraminate: step 5/5. Catalyzes the reversible isomerization-deamination of glucosamine 6-phosphate (GlcN6P) to form fructose 6-phosphate (Fru6P) and ammonium ion. This is Glucosamine-6-phosphate deaminase from Clostridium botulinum (strain Alaska E43 / Type E3).